The primary structure comprises 589 residues: Putative phospholipase B-like 2 (589 aa).

Positions 1–41 (MVGQMYCYPGSHLARALTRALALALVLALLVGPFLSGLAGA) are cleaved as a signal peptide. 2 N-linked (GlcNAc...) asparagine glycosylation sites follow: Asn-88 and Asn-110. Residues Cys-142 and Cys-152 are joined by a disulfide bond. Residues Asn-231, Asn-436, and Asn-465 are each glycosylated (N-linked (GlcNAc...) asparagine). Cys-492 and Cys-495 are joined by a disulfide. N-linked (GlcNAc...) asparagine glycosylation is present at Asn-515.

The protein belongs to the phospholipase B-like family. Interacts with IGF2R. Post-translationally, the p76 protein is synthesized as a 80 kDa precursor which is then processed into a N-terminal 32 kDa form and a C-terminal 45 kDa form. In terms of processing, glycosylated; contains mannose 6-phosphate sugars. In terms of tissue distribution, ubiquitously expressed, with highest levels in heart, brain and liver.

Its subcellular location is the lysosome lumen. Putative phospholipase. The chain is Putative phospholipase B-like 2 (PLBD2) from Homo sapiens (Human).